The chain runs to 513 residues: Gluconokinase (513 aa).

Residues Lys16, Thr261, Gly300, and 412 to 416 (GFARS) contribute to the ATP site.

It belongs to the FGGY kinase family.

It carries out the reaction D-gluconate + ATP = 6-phospho-D-gluconate + ADP + H(+). Its pathway is carbohydrate acid metabolism; D-gluconate degradation. With respect to regulation, catabolite repression by gluconate. The sequence is that of Gluconokinase (gntK) from Bacillus subtilis (strain 168).